Consider the following 969-residue polypeptide: Translation initiation factor IF-2 (969 aa).

Positions 96–377 (KRDPAEPVRA…NSRNQHQDRR (282 aa)) are disordered. Low complexity-rich tracts occupy residues 105 to 157 (AEPA…QAEP), 167 to 181 (AAPAQAVAEPVEPAK), and 216 to 252 (PSAPAESPKSAKAEPAAAPKTTAKPGEIRRAAAPAAP). The segment covering 253 to 264 (DRAREEARRAAE) has biased composition (basic and acidic residues). A compositionally biased stretch (gly residues) spans 357-366 (RAGGKGGRGG). The 168-residue stretch at 470-637 (PRAPVVTVMG…NVLLQAEILE (168 aa)) folds into the tr-type G domain. Positions 479-486 (GHVDHGKT) are G1. GTP is bound at residue 479-486 (GHVDHGKT). Residues 504 to 508 (GITQH) are G2. Residues 525 to 528 (DTPG) are G3. Residues 525-529 (DTPGH) and 579-582 (NKID) contribute to the GTP site. Residues 579 to 582 (NKID) are G4. Positions 615 to 617 (SAK) are G5.

Belongs to the TRAFAC class translation factor GTPase superfamily. Classic translation factor GTPase family. IF-2 subfamily.

The protein localises to the cytoplasm. Its function is as follows. One of the essential components for the initiation of protein synthesis. Protects formylmethionyl-tRNA from spontaneous hydrolysis and promotes its binding to the 30S ribosomal subunits. Also involved in the hydrolysis of GTP during the formation of the 70S ribosomal complex. This Bordetella parapertussis (strain 12822 / ATCC BAA-587 / NCTC 13253) protein is Translation initiation factor IF-2.